Here is a 293-residue protein sequence, read N- to C-terminus: Protein bcp-1 (293 aa).

Basic and acidic residues predominate over residues 1-12 (MGKKRSREEAQK). A disordered region spans residues 1-35 (MGKKRSREEAQKEVVQNDPTVDKMDEDSDSSDSDE). The span at 24 to 35 (MDEDSDSSDSDE) shows a compositional bias: acidic residues.

Belongs to the BCP1 family.

The protein localises to the cytoplasm. The protein resides in the nucleus. In terms of biological role, involved in nuclear export, actin cytoskeleton organization and vesicular transport. The polypeptide is Protein bcp-1 (bcp-1) (Neurospora crassa (strain ATCC 24698 / 74-OR23-1A / CBS 708.71 / DSM 1257 / FGSC 987)).